The sequence spans 39 residues: Photosystem II reaction center protein L (39 aa).

Residues 18 to 38 (SLYLGLLVVFTTGILFSSYFF) traverse the membrane as a helical segment.

The protein belongs to the PsbL family. PSII is composed of 1 copy each of membrane proteins PsbA, PsbB, PsbC, PsbD, PsbE, PsbF, PsbH, PsbI, PsbJ, PsbK, PsbL, PsbM, PsbT, PsbX, PsbY, PsbZ, Psb30/Ycf12, peripheral proteins PsbO, CyanoQ (PsbQ), PsbU, PsbV and a large number of cofactors. It forms dimeric complexes.

It is found in the cellular thylakoid membrane. Its function is as follows. One of the components of the core complex of photosystem II (PSII). PSII is a light-driven water:plastoquinone oxidoreductase that uses light energy to abstract electrons from H(2)O, generating O(2) and a proton gradient subsequently used for ATP formation. It consists of a core antenna complex that captures photons, and an electron transfer chain that converts photonic excitation into a charge separation. This subunit is found at the monomer-monomer interface and is required for correct PSII assembly and/or dimerization. The polypeptide is Photosystem II reaction center protein L (Synechococcus sp. (strain WH7803)).